Consider the following 366-residue polypeptide: Molybdenum import ATP-binding protein ModC (366 aa).

One can recognise an ABC transporter domain in the interval 1 to 231; that stretch reads MSEVILQLQK…KAMRPWQSFS (231 aa). 33–40 contributes to the ATP binding site; it reads GRSGAGKT. The Mop domain maps to 292 to 361; the sequence is ASSIRNILPA…IKGVSVAQRD (70 aa).

It belongs to the ABC transporter superfamily. Molybdate importer (TC 3.A.1.8) family. In terms of assembly, the complex is composed of two ATP-binding proteins (ModC), two transmembrane proteins (ModB) and a solute-binding protein (ModA).

The protein resides in the cell inner membrane. The enzyme catalyses molybdate(out) + ATP + H2O = molybdate(in) + ADP + phosphate + H(+). Part of the ABC transporter complex ModABC involved in molybdenum import. Responsible for energy coupling to the transport system. The chain is Molybdenum import ATP-binding protein ModC from Vibrio cholerae serotype O1 (strain ATCC 39315 / El Tor Inaba N16961).